The primary structure comprises 266 residues: Cell division cycle-associated protein 3 (266 aa).

Positions 1-84 are disordered; the sequence is MGSTQSVSGT…TPMKISGPDP (84 aa). S29 and S31 each carry phosphoserine. Polar residues predominate over residues 32 to 46; it reads AGIQRTPIQVESSPQ. T37 is modified (phosphothreonine). Phosphoserine occurs at positions 44 and 67. T75 is modified (phosphothreonine). The interval 90–119 is F-box-like; it reads KELSEVLETEASESISSPELALPRETPLFY. Position 93 is a phosphoserine (S93). 2 disordered regions span residues 120-225 and 242-266; these read DLDL…LSEN and KAGG…LLES. A compositionally biased stretch (basic and acidic residues) spans 143 to 156; sequence LDPKQVFTKEEAKQ. Positions 157 to 168 are enriched in polar residues; sequence SAETIAASQNSD. The residue at position 197 (S197) is a Phosphoserine. T200 carries the post-translational modification Phosphothreonine. A compositionally biased stretch (polar residues) spans 203–213; it reads QDDNSPGTLTL. The residue at position 207 (S207) is a Phosphoserine. A Phosphothreonine modification is found at T210. A compositionally biased stretch (basic and acidic residues) spans 250 to 259; that stretch reads PNQDHDKENQ. The short motif at 256–258 is the KEN box element; sequence KEN.

Interacts with SKP1. Part of a SCF (SKP1-cullin-F-box) protein ligase complex. Ubiquitinated and degraded by the APC/C-Cdh1 complex.

Its subcellular location is the cytoplasm. It is found in the cytosol. It participates in protein modification; protein ubiquitination. In terms of biological role, F-box-like protein which is required for entry into mitosis. Acts by participating in E3 ligase complexes that mediate the ubiquitination and degradation of WEE1 kinase at G2/M phase. This Mus musculus (Mouse) protein is Cell division cycle-associated protein 3 (Cdca3).